The chain runs to 594 residues: Golgi-associated RAB2 interactor protein 4 (594 aa).

Positions 387–524 are disordered; the sequence is MDAAAGPPVS…TSSGSSKGLG (138 aa). The segment covering 396-406 has biased composition (polar residues); sequence STRQSKSSLSG. Basic and acidic residues-rich tracts occupy residues 408 to 433, 442 to 455, and 468 to 477; these read HGRERTQASAEGCKEGRERREKDRAL, TGESRHKTRGDKIA, and ANRDDKKEKG. The segment covering 511 to 520 has biased composition (polar residues); sequence SLWTTSSGSS.

It belongs to the GARIN family. As to quaternary structure, interacts (via N-terminus) with RAB2B (in GTP-bound form).

It localises to the golgi apparatus. Its function is as follows. RAB2B effector protein required for the compacted Golgi morphology, probably through interaction with small GTPase RAB2B. The polypeptide is Golgi-associated RAB2 interactor protein 4 (Homo sapiens (Human)).